A 271-amino-acid chain; its full sequence is 3-methyl-2-oxobutanoate hydroxymethyltransferase (271 aa).

Mg(2+)-binding residues include Asp-51 and Asp-90. 3-methyl-2-oxobutanoate is bound by residues 51–52, Asp-90, and Lys-118; that span reads DS. Position 120 (Glu-120) interacts with Mg(2+). Glu-186 acts as the Proton acceptor in catalysis.

The protein belongs to the PanB family. Homodecamer; pentamer of dimers. The cofactor is Mg(2+).

It localises to the cytoplasm. The enzyme catalyses 3-methyl-2-oxobutanoate + (6R)-5,10-methylene-5,6,7,8-tetrahydrofolate + H2O = 2-dehydropantoate + (6S)-5,6,7,8-tetrahydrofolate. Its pathway is cofactor biosynthesis; (R)-pantothenate biosynthesis; (R)-pantoate from 3-methyl-2-oxobutanoate: step 1/2. Functionally, catalyzes the reversible reaction in which hydroxymethyl group from 5,10-methylenetetrahydrofolate is transferred onto alpha-ketoisovalerate to form ketopantoate. This is 3-methyl-2-oxobutanoate hydroxymethyltransferase from Xanthomonas axonopodis pv. citri (strain 306).